Here is a 466-residue protein sequence, read N- to C-terminus: Glutamate decarboxylase (466 aa).

Lys277 bears the N6-(pyridoxal phosphate)lysine mark.

This sequence belongs to the group II decarboxylase family. Requires pyridoxal 5'-phosphate as cofactor.

The catalysed reaction is L-glutamate + H(+) = 4-aminobutanoate + CO2. In terms of biological role, converts internalized glutamate to GABA and increases the internal pH. Involved in glutamate-dependent acid resistance. The chain is Glutamate decarboxylase (gadB) from Lactococcus lactis subsp. cremoris (strain MG1363).